Here is a 265-residue protein sequence, read N- to C-terminus: uncharacterized protein (265 aa).

Positions 1 to 20 (MSRAMALFFVLCWIQDEIVL) are cleaved as a signal peptide. A helical transmembrane segment spans residues 192-212 (IIAAVSGVAILMAIVLLLLGL).

It localises to the membrane. This is an uncharacterized protein from Homo sapiens (Human).